The chain runs to 420 residues: MQTLYLDAFSGISGDMFLGALLDLGLDFEQLKTELAKLHVHGYELTQQREAQSSIYGTSFDVQVAGGKDHGFVEHHHHQHEAGHHHDHEARHLADIEALIDGSDLSDTVKHHAKAIFMEIAQAEAAVHHMPLAEVHFHEVGALDSIVDIVGCCIGLELMQIDTIMASPLSDGSGFINVAHGQMPVPVPAVMQMRVGSAIPIQQRLDVHTELITPTGMGLVKTLVREFGPLPENAVPTRVGYGFGKRDTGGFNALRAVLFEKKKLSQQIVNRTADAVLMIEANLDDQTGEGLGYVMNQLLTAGAYDVFFTPIQMKKDRPATKLTVLGNVNDKDLLTKLILQETTTIGVRYQTWQRTIMQRHFLTVATPYGDVQVKVATYQDIEKKMPEYADCAQLAQQFHIPFRTVYQAALVAVDQLDEEA.

The protein belongs to the LarC family.

It catalyses the reaction Ni(II)-pyridinium-3,5-bisthiocarboxylate mononucleotide = pyridinium-3,5-bisthiocarboxylate mononucleotide + Ni(2+). Functionally, involved in the biosynthesis of a nickel-pincer cofactor ((SCS)Ni(II) pincer complex). Binds Ni(2+), and functions in nickel delivery to pyridinium-3,5-bisthiocarboxylic acid mononucleotide (P2TMN), to form the mature cofactor. Is required for the activation of the lactate racemase LarA. May also be involved in the activation of other nickel-pincer cofactor-dependent enzymes. This is Pyridinium-3,5-bisthiocarboxylic acid mononucleotide nickel insertion protein from Lactiplantibacillus plantarum (strain ATCC BAA-793 / NCIMB 8826 / WCFS1) (Lactobacillus plantarum).